The primary structure comprises 528 residues: Peptide chain release factor 3 (528 aa).

The tr-type G domain occupies 9 to 280; it reads RRRRTFAIIS…LKLAPAPAPR (272 aa). GTP is bound by residues 18 to 25, 86 to 90, and 140 to 143; these read SHPDAGKT, DTPGH, and NKLD.

Belongs to the TRAFAC class translation factor GTPase superfamily. Classic translation factor GTPase family. PrfC subfamily.

The protein resides in the cytoplasm. Functionally, increases the formation of ribosomal termination complexes and stimulates activities of RF-1 and RF-2. It binds guanine nucleotides and has strong preference for UGA stop codons. It may interact directly with the ribosome. The stimulation of RF-1 and RF-2 is significantly reduced by GTP and GDP, but not by GMP. The chain is Peptide chain release factor 3 from Symbiobacterium thermophilum (strain DSM 24528 / JCM 14929 / IAM 14863 / T).